Here is a 117-residue protein sequence, read N- to C-terminus: Protein TCL1B2 (117 aa).

It belongs to the TCL1 family.

The chain is Protein TCL1B2 (Tcl1b2) from Mus musculus (Mouse).